The primary structure comprises 230 residues: Large ribosomal subunit protein uL1 (230 aa).

The protein belongs to the universal ribosomal protein uL1 family. In terms of assembly, part of the 50S ribosomal subunit.

Functionally, binds directly to 23S rRNA. The L1 stalk is quite mobile in the ribosome, and is involved in E site tRNA release. In terms of biological role, protein L1 is also a translational repressor protein, it controls the translation of the L11 operon by binding to its mRNA. In Rubrobacter xylanophilus (strain DSM 9941 / JCM 11954 / NBRC 16129 / PRD-1), this protein is Large ribosomal subunit protein uL1.